The following is a 492-amino-acid chain: Catalase isozyme 2 (492 aa).

Catalysis depends on residues histidine 65 and asparagine 138. Tyrosine 348 is a binding site for heme.

The protein belongs to the catalase family. Homotetramer. It depends on heme as a cofactor.

It localises to the peroxisome. The protein resides in the glyoxysome. The enzyme catalyses 2 H2O2 = O2 + 2 H2O. In terms of biological role, occurs in almost all aerobically respiring organisms and serves to protect cells from the toxic effects of hydrogen peroxide. The polypeptide is Catalase isozyme 2 (CAT2) (Solanum tuberosum (Potato)).